We begin with the raw amino-acid sequence, 614 residues long: 4-hydroxy-3-methylbut-2-en-1-yl diphosphate synthase (flavodoxin) (614 aa).

The [4Fe-4S] cluster site is built by Cys522, Cys525, Cys556, and Glu563.

It belongs to the IspG family. The cofactor is [4Fe-4S] cluster.

It carries out the reaction (2E)-4-hydroxy-3-methylbut-2-enyl diphosphate + oxidized [flavodoxin] + H2O + 2 H(+) = 2-C-methyl-D-erythritol 2,4-cyclic diphosphate + reduced [flavodoxin]. It functions in the pathway isoprenoid biosynthesis; isopentenyl diphosphate biosynthesis via DXP pathway; isopentenyl diphosphate from 1-deoxy-D-xylulose 5-phosphate: step 5/6. Functionally, converts 2C-methyl-D-erythritol 2,4-cyclodiphosphate (ME-2,4cPP) into 1-hydroxy-2-methyl-2-(E)-butenyl 4-diphosphate. This is 4-hydroxy-3-methylbut-2-en-1-yl diphosphate synthase (flavodoxin) from Phocaeicola vulgatus (strain ATCC 8482 / DSM 1447 / JCM 5826 / CCUG 4940 / NBRC 14291 / NCTC 11154) (Bacteroides vulgatus).